Here is a 392-residue protein sequence, read N- to C-terminus: Iripin-4 (392 aa).

Residues 1-16 form the signal peptide; the sequence is MRSLATFMSLLTICWG. Residues Asn104, Asn130, and Asn265 are each glycosylated (N-linked (GlcNAc...) asparagine).

It belongs to the serpin family. As to expression, female salivary gland.

It localises to the secreted. Functionally, serpin with unknown function. Weakly inhibits human granzyme B (GZMB). Acts as a substrate for porcine elastase. The chain is Iripin-4 from Ixodes ricinus (Common tick).